Here is a 1336-residue protein sequence, read N- to C-terminus: Aldehyde oxidase 4 (1336 aa).

The 2Fe-2S ferredoxin-type domain occupies 8–95 (DELIFFVNGK…GAAITTVEGV (88 aa)). Positions 47, 52, 55, and 77 each coordinate [2Fe-2S] cluster. Glutamine 116 contacts Mo-molybdopterin. [2Fe-2S] cluster-binding residues include cysteine 117, cysteine 120, cysteine 152, and cysteine 154. Cysteine 154 is a binding site for Mo-molybdopterin. The region spanning 237-423 (FQGKRTTWII…LSIFIPYTAQ (187 aa)) is the FAD-binding PCMH-type domain. Residues 265–272 (LVMGNTTV), alanine 346, threonine 355, histidine 359, aspartate 368, and isoleucine 413 each bind FAD. Mo-molybdopterin contacts are provided by residues 804-805 (AF), leucine 1045, 1086-1089 (GSMG), glutamine 1201, and leucine 1265. Glutamate 1267 acts as the Proton acceptor; for azaheterocycle hydroxylase activity in catalysis.

Belongs to the xanthine dehydrogenase family. Homodimer. [2Fe-2S] cluster serves as cofactor. It depends on FAD as a cofactor. The cofactor is Mo-molybdopterin. In terms of tissue distribution, highly expressed in Harderian glands and sebaceous glands with detectable levels in the epidermis and other keratinized epithelia (at protein level). Detected in testis. The expression is 3 times greater in females than in males.

The protein resides in the cytoplasm. It catalyses the reaction an aldehyde + O2 + H2O = a carboxylate + H2O2 + H(+). The catalysed reaction is retinal + O2 + H2O = retinoate + H2O2 + H(+). It carries out the reaction all-trans-retinal + O2 + H2O = all-trans-retinoate + H2O2 + H(+). Functionally, aldehyde oxidase able to catalyze the oxidation of retinaldehyde into retinoate. Is responsible for the major all-trans-retinaldehyde-metabolizing activity in the Harderian gland, and contributes a significant amount of the same activity in the skin. Is devoid of pyridoxal-oxidizing activity, in contrast to the other aldehyde oxidases. Acts as a negative modulator of the epidermal trophism. May be able to oxidize a wide variety of aldehydes into their corresponding carboxylates and to hydroxylate azaheterocycles. The protein is Aldehyde oxidase 4 (Aox4) of Mus musculus (Mouse).